The sequence spans 565 residues: NAD-dependent malic enzyme (565 aa).

Tyr-104 serves as the catalytic Proton donor. Arg-157 is an NAD(+) binding site. Lys-175 (proton acceptor) is an active-site residue. 3 residues coordinate a divalent metal cation: Glu-246, Asp-247, and Asp-270. NAD(+) contacts are provided by Asp-270 and Asn-418.

The protein belongs to the malic enzymes family. Homotetramer. It depends on Mg(2+) as a cofactor. Mn(2+) serves as cofactor.

It catalyses the reaction (S)-malate + NAD(+) = pyruvate + CO2 + NADH. It carries out the reaction oxaloacetate + H(+) = pyruvate + CO2. In Klebsiella pneumoniae (strain 342), this protein is NAD-dependent malic enzyme.